The following is a 488-amino-acid chain: Probable glycine dehydrogenase (decarboxylating) subunit 2 (488 aa).

The residue at position 274 (Lys-274) is an N6-(pyridoxal phosphate)lysine.

The protein belongs to the GcvP family. C-terminal subunit subfamily. As to quaternary structure, the glycine cleavage system is composed of four proteins: P, T, L and H. In this organism, the P 'protein' is a heterodimer of two subunits. Pyridoxal 5'-phosphate is required as a cofactor.

It carries out the reaction N(6)-[(R)-lipoyl]-L-lysyl-[glycine-cleavage complex H protein] + glycine + H(+) = N(6)-[(R)-S(8)-aminomethyldihydrolipoyl]-L-lysyl-[glycine-cleavage complex H protein] + CO2. Its function is as follows. The glycine cleavage system catalyzes the degradation of glycine. The P protein binds the alpha-amino group of glycine through its pyridoxal phosphate cofactor; CO(2) is released and the remaining methylamine moiety is then transferred to the lipoamide cofactor of the H protein. In Listeria monocytogenes serovar 1/2a (strain ATCC BAA-679 / EGD-e), this protein is Probable glycine dehydrogenase (decarboxylating) subunit 2.